Consider the following 163-residue polypeptide: 16S rRNA aminocarboxypropyltransferase (163 aa).

S-adenosyl-L-methionine is bound by residues Thr18, Ile66, Leu87, and Ser106.

It belongs to the TDD superfamily. TSR3 family.

The protein resides in the cytoplasm. It carries out the reaction an N(1)-methylpseudouridine in rRNA + S-adenosyl-L-methionine = N(1)-methyl-N(3)-[(3S)-3-amino-3-carboxypropyl]pseudouridine in rRNA + S-methyl-5'-thioadenosine + H(+). Its function is as follows. Aminocarboxypropyltransferase that catalyzes the aminocarboxypropyl transfer on pseudouridine corresponding to position 914 in M.jannaschii 16S rRNA. It constitutes the last step in biosynthesis of the hypermodified N1-methyl-N3-(3-amino-3-carboxypropyl) pseudouridine (m1acp3-Psi). The protein is 16S rRNA aminocarboxypropyltransferase of Thermoplasma acidophilum (strain ATCC 25905 / DSM 1728 / JCM 9062 / NBRC 15155 / AMRC-C165).